The chain runs to 279 residues: MPPVLRTVAELRARVSDWKAAGETVGVVPTMGALHEGHLSLARRARAACDRVIVTIFVNPRQFNNPADLEKYPRTEAQDAALLASVGVDAVFAPGPEEVYPRGFATNVSVSGVSEPLEGAHRPGHFDGVATVVAKLFGMTRADRAFFGEKDWQQLMVVRRLVADLNIPVTIEGCATVREADGLALSSRNRRLSAEGRARAPALVRAMQAATEAMRGGQAVPEALAEARAAVLAAGFETVDYLELRTADLLLPMERLEGRGRLLAAATLDGVRLIDNIPV.

31–38 (MGALHEGH) contributes to the ATP binding site. H38 (proton donor) is an active-site residue. Q62 lines the (R)-pantoate pocket. Q62 contacts beta-alanine. 148-151 (GEKD) is a binding site for ATP. Q154 serves as a coordination point for (R)-pantoate. ATP contacts are provided by residues V177 and 185–188 (LSSR).

The protein belongs to the pantothenate synthetase family. In terms of assembly, homodimer.

It is found in the cytoplasm. It carries out the reaction (R)-pantoate + beta-alanine + ATP = (R)-pantothenate + AMP + diphosphate + H(+). The protein operates within cofactor biosynthesis; (R)-pantothenate biosynthesis; (R)-pantothenate from (R)-pantoate and beta-alanine: step 1/1. In terms of biological role, catalyzes the condensation of pantoate with beta-alanine in an ATP-dependent reaction via a pantoyl-adenylate intermediate. This chain is Pantothenate synthetase, found in Cereibacter sphaeroides (strain ATCC 17029 / ATH 2.4.9) (Rhodobacter sphaeroides).